The primary structure comprises 98 residues: N(2)-fixation sustaining protein CowN (98 aa).

The protein belongs to the CowN family.

Its function is as follows. Is required to sustain N(2)-dependent growth in the presence of low levels of carbon monoxide (CO). Probably acts by protecting the N(2) fixation ability of the nitrogenase complex, which is inactivated in the presence of CO. This is N(2)-fixation sustaining protein CowN from Dechloromonas aromatica (strain RCB).